The chain runs to 226 residues: ATP synthase subunit a (226 aa).

5 helical membrane-spanning segments follow: residues 18 to 38 (LSLNWLSTFLGLFLIPVSYWL), 74 to 94 (FISLFSLIMFNNFLGLFPYIF), 100 to 120 (LTLTLALAFPLWLSFMLYGWI), 158 to 180 (LAVRLTANMIAGHLLLTLLGNTG), and 197 to 217 (IALLVLESAVAIIQSYVFAVL).

It belongs to the ATPase A chain family. In terms of assembly, F-type ATPases have 2 components, CF(1) - the catalytic core - and CF(0) - the membrane proton channel. CF(1) has five subunits: alpha(3), beta(3), gamma(1), delta(1), epsilon(1). CF(0) has three main subunits: a, b and c.

It localises to the mitochondrion inner membrane. Mitochondrial membrane ATP synthase (F(1)F(0) ATP synthase or Complex V) produces ATP from ADP in the presence of a proton gradient across the membrane which is generated by electron transport complexes of the respiratory chain. F-type ATPases consist of two structural domains, F(1) - containing the extramembraneous catalytic core and F(0) - containing the membrane proton channel, linked together by a central stalk and a peripheral stalk. During catalysis, ATP synthesis in the catalytic domain of F(1) is coupled via a rotary mechanism of the central stalk subunits to proton translocation. Key component of the proton channel; it may play a direct role in the translocation of protons across the membrane. In Anopheles gambiae (African malaria mosquito), this protein is ATP synthase subunit a (mt:ATPase6).